We begin with the raw amino-acid sequence, 299 residues long: Putative arsenical pump-driving ATPase 2 (299 aa).

Residue 8 to 15 (GKGGVGKT) coordinates ATP.

Belongs to the arsA ATPase family.

The catalysed reaction is arsenite(in) + ATP + H2O = arsenite(out) + ADP + phosphate + H(+). Anion-transporting ATPase. Catalyzes the extrusion of arsenite. The protein is Putative arsenical pump-driving ATPase 2 (arsA2) of Aquifex aeolicus (strain VF5).